Consider the following 405-residue polypeptide: Amino acid transporter AVT1I (405 aa).

11 helical membrane passes run 22 to 42 (CFNA…YSLA), 46 to 66 (WLSL…SLLI), 93 to 113 (IIVS…FLIL), 140 to 160 (FMAT…LSVL), 169 to 189 (LATT…GIGF), 201 to 221 (IPTA…LPTL), 234 to 254 (VLLI…VLGY), 278 to 298 (VAIY…ITPT), 318 to 338 (LLIS…LPFF), 343 to 363 (SLVG…LCYL), and 377 to 397 (IMLF…TYIA).

It belongs to the amino acid/polyamine transporter 2 family. Amino acid/auxin permease (AAAP) (TC 2.A.18.5) subfamily.

It localises to the membrane. This Arabidopsis thaliana (Mouse-ear cress) protein is Amino acid transporter AVT1I.